Reading from the N-terminus, the 872-residue chain is Alanine--tRNA ligase (872 aa).

Zn(2+) is bound by residues H567, H571, C669, and H673.

The protein belongs to the class-II aminoacyl-tRNA synthetase family. Zn(2+) serves as cofactor.

The protein resides in the cytoplasm. The catalysed reaction is tRNA(Ala) + L-alanine + ATP = L-alanyl-tRNA(Ala) + AMP + diphosphate. Functionally, catalyzes the attachment of alanine to tRNA(Ala) in a two-step reaction: alanine is first activated by ATP to form Ala-AMP and then transferred to the acceptor end of tRNA(Ala). Also edits incorrectly charged Ser-tRNA(Ala) and Gly-tRNA(Ala) via its editing domain. The protein is Alanine--tRNA ligase of Streptococcus pyogenes serotype M3 (strain ATCC BAA-595 / MGAS315).